Consider the following 142-residue polypeptide: Membrane protein YneK (142 aa).

Residues Phe6–Phe26 form a helical membrane-spanning segment.

As to quaternary structure, interacts with the N-terminal D1 domain of dynamin-like protein DynA.

The protein localises to the cell membrane. The chain is Membrane protein YneK (yneK) from Bacillus subtilis (strain 168).